The chain runs to 160 residues: Tumor suppressor ARF (160 aa).

Residues Met-1 to Pro-63 form an interaction with CDK5RAP3 and MDM2 region. Disordered regions lie at residues Pro-49 to Ser-74 and His-90 to Ala-116.

As to quaternary structure, does not interact with cyclins, CDK1, CDK2, CDK4, CDK5 or CDK6. Binds to BCL6, E2F1, HUWE1, MDM2, MYC, NPM1/B23, TOP1/TOPOI and UBE2I/UBC9. Interacts with TBRG1 and COMMD1. Interacts with CDKN2AIP and E4F1. Interacts with CDK5RAP3 and MDM2; form a ternary complex involved in regulation of p53/TP53. Interacts with NOP53; the interaction is direct and promotes ARF nucleoplasmic relocalization and ubiquitin-mediated proteasomal degradation. Interacts with TTF1 (via the N-terminal region (NRD) and a C-terminal region); the interaction is direct and inhibits the nucleolar localization of TTF1. Ubiquitinated in normal cells by TRIP12 via the ubiquitin fusion degradation (UFD) pathway, a process that mediates ubiquitination at the N-terminus, regardless of the absence of lysine residues. Ubiquitination leads to its proteasomal degradation. In cancer cells, however, TRIP12 is located in a different cell compartment, preventing ubiquitination and degradation. Widely expressed with very low levels in kidney and colon.

The protein localises to the nucleus. Its subcellular location is the nucleolus. It is found in the nucleoplasm. Functionally, capable of inducing cell cycle arrest in G1 and G2 phases. Acts as a tumor suppressor. Binds to MDM2 and blocks its nucleocytoplasmic shuttling by sequestering it in the nucleolus. This inhibits the oncogenic action of MDM2 by blocking MDM2-induced degradation of p53 and enhancing p53-dependent transactivation and apoptosis. Also induces G2 arrest and apoptosis in a p53-independent manner by preventing the activation of cyclin B1/CDC2 complexes. Binds to BCL6 and down-regulates BCL6-induced transcriptional repression. Binds to E2F1 and MYC and blocks their transcriptional activator activity but has no effect on MYC transcriptional repression. Binds to TOP1/TOPOI and stimulates its activity. This complex binds to rRNA gene promoters and may play a role in rRNA transcription and/or maturation. Interacts with NPM1/B23 and promotes its polyubiquitination and degradation, thus inhibiting rRNA processing. Plays a role in inhibiting ribosome biogenesis, perhaps by binding to the nucleolar localization sequence of transcription termination factor TTF1, and thereby preventing nucleolar localization of TTF1. Interacts with COMMD1 and promotes its 'Lys63'-linked polyubiquitination. Interacts with UBE2I/UBC9 and enhances sumoylation of a number of its binding partners including MDM2 and E2F1. Binds to HUWE1 and represses its ubiquitin ligase activity. May play a role in controlling cell proliferation and apoptosis during mammary gland development. This chain is Tumor suppressor ARF, found in Rattus norvegicus (Rat).